The following is a 902-amino-acid chain: MSQQTTIRKLAELVNTPVDKLLVQLAEAGMKFSGPDQVVTSTEKMKLLGFLRRTHGKADTPAEAASEAAKKITLNRRKLQEVTVNAGRTKTTVNVEVRQKRTYVKSENEGSGRAAPMTPDEERADILAKLAASRQRNLDEQQRLAESDRARDEAIQRKRDEEQAAKDRVEAERKAAEEAAAAASAPAPVAAAPAPSSAPAARAPSSPSSAPRPARPAGASPASRPATPARPDDRNNAAKHKTRGSHVMVAGVEDDDATKRFAGQLHLSAADRARRSNVRGKPTGRPGSSSSRRNDGGRGSNQSNSGPHGFERPTAPVVREVAIGETITVADLAQKLALKGGDVVKALFKMGVMATITQSIDHDTAALVTEELGHKAVRADNADFEDALLAHAEDAQGETTSRPPVVTIMGHVDHGKTSLLDYIRRTKIASGEAGGITQHIGAYHVETGRGVISFLDTPGHAAFTSMRARGAKITDIVVLVVAADDGVMPQTKEAVAHAKAAGVPLIVAVNKIDKAGADPLRVKNELLAENVVAEDFGGDTQFIEVSAKVGTGVDTLLDAISLQAEVLELKAVADGRASGTVIESSLDKGRGPVATVLVQQGALKRGDYLVCGIQYGRVRALFDETGHQPASAGPSIPVQVLGLSGVPEAGDDFVVVDDERLAKDVAQQRETKRRESRLVASATNRMEDILAQMGKGEGQQVLNLVIKADVQGSVEALKQSLVALSNDDIRINVIHSGVGGITESDANSAAASKATIIGFNVRADASARKIVESNGIDLRYFSIIYDVIDQVKQVASGLLGVEIREEIIGIAQVRDVFRSSKFGAVAGCMIIEGVVKRSKPIRVLRDSVVVFEGELESLRRFKENVDEVRNGTECGIGVKAYNDVKAGDQIECFERIEVARTL.

Residues asparagine 137–glutamate 177 show a composition bias toward basic and acidic residues. 2 disordered regions span residues asparagine 137 to methionine 248 and histidine 266 to threonine 314. Composition is skewed to low complexity over residues glutamate 178 to alanine 229 and arginine 279 to serine 291. The tr-type G domain occupies serine 401 to lysine 570. The segment at glycine 410 to threonine 417 is G1. Glycine 410–threonine 417 is a GTP binding site. The G2 stretch occupies residues glycine 435–histidine 439. Residues aspartate 456–glycine 459 are G3. GTP contacts are provided by residues aspartate 456–histidine 460 and asparagine 510–aspartate 513. The interval asparagine 510–aspartate 513 is G4. The tract at residues serine 546–lysine 548 is G5.

The protein belongs to the TRAFAC class translation factor GTPase superfamily. Classic translation factor GTPase family. IF-2 subfamily.

The protein localises to the cytoplasm. In terms of biological role, one of the essential components for the initiation of protein synthesis. Protects formylmethionyl-tRNA from spontaneous hydrolysis and promotes its binding to the 30S ribosomal subunits. Also involved in the hydrolysis of GTP during the formation of the 70S ribosomal complex. In Xanthomonas campestris pv. campestris (strain 8004), this protein is Translation initiation factor IF-2.